Consider the following 72-residue polypeptide: Translation initiation factor IF-1 (72 aa).

Residues 1–72 (MAKEDVIEVE…NRGRIVYRYK (72 aa)) enclose the S1-like domain.

It belongs to the IF-1 family. Component of the 30S ribosomal translation pre-initiation complex which assembles on the 30S ribosome in the order IF-2 and IF-3, IF-1 and N-formylmethionyl-tRNA(fMet); mRNA recruitment can occur at any time during PIC assembly.

It is found in the cytoplasm. One of the essential components for the initiation of protein synthesis. Stabilizes the binding of IF-2 and IF-3 on the 30S subunit to which N-formylmethionyl-tRNA(fMet) subsequently binds. Helps modulate mRNA selection, yielding the 30S pre-initiation complex (PIC). Upon addition of the 50S ribosomal subunit IF-1, IF-2 and IF-3 are released leaving the mature 70S translation initiation complex. The polypeptide is Translation initiation factor IF-1 (Moorella thermoacetica (strain ATCC 39073 / JCM 9320)).